Here is a 150-residue protein sequence, read N- to C-terminus: SsrA-binding protein (150 aa).

The protein belongs to the SmpB family.

It is found in the cytoplasm. Functionally, required for rescue of stalled ribosomes mediated by trans-translation. Binds to transfer-messenger RNA (tmRNA), required for stable association of tmRNA with ribosomes. tmRNA and SmpB together mimic tRNA shape, replacing the anticodon stem-loop with SmpB. tmRNA is encoded by the ssrA gene; the 2 termini fold to resemble tRNA(Ala) and it encodes a 'tag peptide', a short internal open reading frame. During trans-translation Ala-aminoacylated tmRNA acts like a tRNA, entering the A-site of stalled ribosomes, displacing the stalled mRNA. The ribosome then switches to translate the ORF on the tmRNA; the nascent peptide is terminated with the 'tag peptide' encoded by the tmRNA and targeted for degradation. The ribosome is freed to recommence translation, which seems to be the essential function of trans-translation. The protein is SsrA-binding protein of Borreliella afzelii (strain PKo) (Borrelia afzelii).